The sequence spans 555 residues: Glucose-6-phosphate isomerase (555 aa).

D-glucose 6-phosphate is bound by residues 169–170 (GS), 219–224 (SKTFTT), Gln-364, Glu-368, His-399, and Lys-521. Residue Glu-368 is the Proton donor of the active site. Active-site residues include His-399 and Lys-521.

The protein belongs to the GPI family. In terms of assembly, homodimer.

Its subcellular location is the cytoplasm. It is found in the cytosol. The catalysed reaction is alpha-D-glucose 6-phosphate = beta-D-fructose 6-phosphate. It functions in the pathway carbohydrate degradation; glycolysis; D-glyceraldehyde 3-phosphate and glycerone phosphate from D-glucose: step 2/4. In the cytoplasm, catalyzes the conversion of glucose-6-phosphate to fructose-6-phosphate, the second step in glycolysis, and the reverse reaction during gluconeogenesis. The sequence is that of Glucose-6-phosphate isomerase (PGI1) from Candida glabrata (strain ATCC 2001 / BCRC 20586 / JCM 3761 / NBRC 0622 / NRRL Y-65 / CBS 138) (Yeast).